A 455-amino-acid polypeptide reads, in one-letter code: Adenylosuccinate synthetase isozyme 2 (455 aa).

Residues 1–25 (MSDSGDAQPQDGGNSSSSRGKSPSV) are disordered. Low complexity predominate over residues 12–25 (GGNSSSSRGKSPSV). Residues 38–44 (GDEGKGK) and 66–68 (GHT) contribute to the GTP site. Asp-39 acts as the Proton acceptor in catalysis. Asp-39 and Gly-66 together coordinate Mg(2+). Substrate is bound at residue Asp-39. Residues 39–42 (DEGK), 64–67 (NAGH), Thr-161, Arg-175, Asn-254, Thr-269, and Arg-333 each bind IMP. His-67 functions as the Proton donor in the catalytic mechanism. Residue 329–335 (VTTGRKR) coordinates substrate. GTP-binding positions include Arg-335, 361 to 363 (KLD), and 443 to 446 (GVGK).

Belongs to the adenylosuccinate synthetase family. As to quaternary structure, homodimer. Mg(2+) is required as a cofactor.

It localises to the cytoplasm. The protein resides in the mitochondrion. It catalyses the reaction IMP + L-aspartate + GTP = N(6)-(1,2-dicarboxyethyl)-AMP + GDP + phosphate + 2 H(+). It functions in the pathway purine metabolism; AMP biosynthesis via de novo pathway; AMP from IMP: step 1/2. Its activity is regulated as follows. Inhibited competitively by AMP and IMP and non-competitively by fructose 1,6-bisphosphate. Plays an important role in the de novo pathway and in the salvage pathway of purine nucleotide biosynthesis. Catalyzes the first committed step in the biosynthesis of AMP from IMP. The chain is Adenylosuccinate synthetase isozyme 2 (adss2) from Danio rerio (Zebrafish).